The sequence spans 303 residues: Phosphatidylglycerol--prolipoprotein diacylglyceryl transferase (303 aa).

The next 3 membrane-spanning stretches (helical) occupy residues 18–38, 58–78, and 107–127; these read VGFF…LIGL, LLPI…VIFE, and WQGG…ILIF. Arginine 154 serves as a coordination point for a 1,2-diacyl-sn-glycero-3-phospho-(1'-sn-glycerol). Transmembrane regions (helical) follow at residues 193-213 and 266-286; these read PTFL…ISLI and IAQL…FWIY.

It belongs to the Lgt family.

It is found in the cell inner membrane. It catalyses the reaction L-cysteinyl-[prolipoprotein] + a 1,2-diacyl-sn-glycero-3-phospho-(1'-sn-glycerol) = an S-1,2-diacyl-sn-glyceryl-L-cysteinyl-[prolipoprotein] + sn-glycerol 1-phosphate + H(+). It functions in the pathway protein modification; lipoprotein biosynthesis (diacylglyceryl transfer). Functionally, catalyzes the transfer of the diacylglyceryl group from phosphatidylglycerol to the sulfhydryl group of the N-terminal cysteine of a prolipoprotein, the first step in the formation of mature lipoproteins. The polypeptide is Phosphatidylglycerol--prolipoprotein diacylglyceryl transferase (Prochlorococcus marinus (strain MIT 9211)).